A 1220-amino-acid polypeptide reads, in one-letter code: von Willebrand factor A domain-containing protein 5B1 (1220 aa).

An N-terminal signal peptide occupies residues 1–18 (MPGLLNWITGAALPLTAS). The 131-residue stretch at 19–149 (DVTSCVSGYA…NVTIFISTSS (131 aa)) folds into the VIT domain. Asn-140 carries N-linked (GlcNAc...) asparagine glycosylation. Residues 361–529 (EFIFLIDRSS…RLQPKMVKSL (169 aa)) form the VWFA domain. N-linked (GlcNAc...) asparagine glycosylation is present at Asn-650. The segment at 715-807 (NSGQDLNQGP…SPSRPATPAP (93 aa)) is disordered. Residues 757 to 774 (VRERTSDSRSPGDLEPSH) show a composition bias toward basic and acidic residues. Low complexity predominate over residues 796–807 (RASPSRPATPAP). The residue at position 881 (Tyr-881) is a Phosphotyrosine. Disordered stretches follow at residues 937-962 (RGTS…GKFQ) and 976-995 (EARS…QRSL). Residue Asn-1017 is glycosylated (N-linked (GlcNAc...) asparagine). The span at 1093 to 1111 (TTRPSESKTPSPQLCTSSP) shows a compositional bias: polar residues. Residues 1093–1115 (TTRPSESKTPSPQLCTSSPPRHP) form a disordered region.

The protein localises to the secreted. This chain is von Willebrand factor A domain-containing protein 5B1 (VWA5B1), found in Homo sapiens (Human).